We begin with the raw amino-acid sequence, 198 residues long: Na(+)-translocating NADH-quinone reductase subunit E (198 aa).

Transmembrane regions (helical) follow at residues 11–31 (SIFI…FLAV), 39–59 (FGLG…NNLV), 77–97 (FLSF…LEMI), 110–130 (GIFL…SFMV), 140–160 (VVYG…LAGI), and 176–196 (LGIT…FSGV).

This sequence belongs to the NqrDE/RnfAE family. As to quaternary structure, composed of six subunits; NqrA, NqrB, NqrC, NqrD, NqrE and NqrF.

The protein resides in the cell inner membrane. It catalyses the reaction a ubiquinone + n Na(+)(in) + NADH + H(+) = a ubiquinol + n Na(+)(out) + NAD(+). NQR complex catalyzes the reduction of ubiquinone-1 to ubiquinol by two successive reactions, coupled with the transport of Na(+) ions from the cytoplasm to the periplasm. NqrA to NqrE are probably involved in the second step, the conversion of ubisemiquinone to ubiquinol. The protein is Na(+)-translocating NADH-quinone reductase subunit E of Aliivibrio fischeri (strain ATCC 700601 / ES114) (Vibrio fischeri).